The chain runs to 290 residues: Small ribosomal subunit protein uS2 (290 aa).

Low complexity predominate over residues 263 to 282 (ATAGATWEAEAGGDWAAESA). Positions 263 to 290 (ATAGATWEAEAGGDWAAESAQPNPETKW) are disordered.

This sequence belongs to the universal ribosomal protein uS2 family. Component of the small ribosomal subunit. Mature ribosomes consist of a small (40S) and a large (60S) subunit. The 40S subunit contains about 33 different proteins and 1 molecule of RNA (18S). The 60S subunit contains about 49 different proteins and 3 molecules of RNA (25S, 5.8S and 5S). Interacts with rps21.

The protein localises to the cytoplasm. Required for the assembly and/or stability of the 40S ribosomal subunit. Required for the processing of the 20S rRNA-precursor to mature 18S rRNA in a late step of the maturation of 40S ribosomal subunits. This is Small ribosomal subunit protein uS2 (rps0) from Talaromyces stipitatus (strain ATCC 10500 / CBS 375.48 / QM 6759 / NRRL 1006) (Penicillium stipitatum).